Reading from the N-terminus, the 152-residue chain is FAD synthase (152 aa).

ATP contacts are provided by residues 9–10, 14–17, and Asp92; these read TF and HPGH.

This sequence belongs to the archaeal FAD synthase family. Homodimer. Requires a divalent metal cation as cofactor.

It catalyses the reaction FMN + ATP + H(+) = FAD + diphosphate. It functions in the pathway cofactor biosynthesis; FAD biosynthesis; FAD from FMN: step 1/1. Its function is as follows. Catalyzes the transfer of the AMP portion of ATP to flavin mononucleotide (FMN) to produce flavin adenine dinucleotide (FAD) coenzyme. The polypeptide is FAD synthase (Ferroglobus placidus (strain DSM 10642 / AEDII12DO)).